We begin with the raw amino-acid sequence, 840 residues long: Phosphatidylglycerol lysyltransferase (840 aa).

At 1–8 the chain is on the cytoplasmic side; the sequence is MNQEVKNK. The helical transmembrane segment at 9 to 29 threads the bilayer; that stretch reads IFSILKITFATALFIFVAITL. Residues 30-52 are Extracellular-facing; sequence YRELSGINFKDTLVEFSKINRMS. Residues 53-73 traverse the membrane as a helical segment; the sequence is LVLLFIGGGASLVILSMYDVI. At 74-89 the chain is on the cytoplasmic side; the sequence is LSRALKMDISLGKVLR. The chain crosses the membrane as a helical span at residues 90–110; sequence VSYIINALNAIVGFGGFIGAG. Residues 111 to 128 lie on the Extracellular side of the membrane; sequence VRAMVYKNYTHDKKKLVH. The helical transmembrane segment at 129–149 threads the bilayer; that stretch reads FISLILISMLTGLSLLSLLIV. Residues 150-161 lie on the Cytoplasmic side of the membrane; the sequence is FHVFDASLILDK. The chain crosses the membrane as a helical span at residues 162–182; sequence ITWVRWVLYVVSFFLPLFIIY. Residues 183-200 are Extracellular-facing; that stretch reads SMVRPPDKNNRFVGLYCT. Residues 201 to 221 form a helical membrane-spanning segment; that stretch reads LVSCVEWLAAAVVLYFCGVIV. The Cytoplasmic segment spans residues 222–229; that stretch reads DAHVSFMS. A helical membrane pass occupies residues 230-250; the sequence is FIAIFIIAALSGLVSFIPGGF. At 251–271 the chain is on the extracellular side; the sequence is GAFDLVVLLGFKTLGVPEEKV. Residues 272-292 form a helical membrane-spanning segment; it reads LLMLLLYRFAYYFVPVIIALI. Residues 293-337 lie on the Cytoplasmic side of the membrane; the sequence is LSSFEFGTSAKKYIEGSKYFIPAKDVTSFLMSYQKDIIAKIPSLS. A helical transmembrane segment spans residues 338-358; it reads LAILVFFTSMIFFVNNLTIVY. The Extracellular segment spans residues 359–369; the sequence is DALYDGNHLTY. A helical membrane pass occupies residues 370-390; the sequence is YILLAIHTSACLLLLLNVVGI. The Cytoplasmic portion of the chain corresponds to 391–394; it reads YKQS. Transmembrane regions (helical) follow at residues 395 to 415 and 416 to 436; these read RRAI…TFFT and YASY…IVAF. The Cytoplasmic portion of the chain corresponds to 437-450; sequence RRARRLKRPVRMRN. A helical membrane pass occupies residues 451 to 471; it reads IVAMLLFSLFILYVNHIFIAG. Residues 472-489 are Extracellular-facing; it reads TLYALDIYTIEMHTSVLR. The chain crosses the membrane as a helical span at residues 490–510; that stretch reads YYFWLTILIIAIIIGMIAWLF. Residues 511–840 lie on the Cytoplasmic side of the membrane; the sequence is DYQFSKVRIS…SKVMRVIRHK (330 aa).

The protein belongs to the LPG synthase family.

Its subcellular location is the cell membrane. The catalysed reaction is L-lysyl-tRNA(Lys) + a 1,2-diacyl-sn-glycero-3-phospho-(1'-sn-glycerol) = a 1,2-diacyl-sn-glycero-3-phospho-1'-(3'-O-L-lysyl)-sn-glycerol + tRNA(Lys). In terms of biological role, catalyzes the transfer of a lysyl group from L-lysyl-tRNA(Lys) to membrane-bound phosphatidylglycerol (PG), which produces lysylphosphatidylglycerol (LPG), a major component of the bacterial membrane with a positive net charge. LPG synthesis contributes to bacterial virulence as it is involved in the resistance mechanism against cationic antimicrobial peptides (CAMP) produces by the host's immune system (defensins, cathelicidins) and by the competing microorganisms (bacteriocins). In fact, the modification of anionic phosphatidylglycerol with positively charged L-lysine results in repulsion of the peptides. In Staphylococcus aureus (strain COL), this protein is Phosphatidylglycerol lysyltransferase (mprF).